A 313-amino-acid chain; its full sequence is Olfactory receptor 8B3 (313 aa).

The Extracellular portion of the chain corresponds to 1–25 (MLARNNSLVTEFILAGLTDHPEFQQ). An N-linked (GlcNAc...) asparagine glycan is attached at N5. Residues 26–46 (PLFFLFLVVYIVTMVGNLGLI) form a helical membrane-spanning segment. The Cytoplasmic portion of the chain corresponds to 47 to 54 (ILFGLNSH). Residues 55–75 (LHTPMYYFLFNLSFIDLCYSS) form a helical membrane-spanning segment. Residues 76-99 (VFTPKMLMNFVSKKNIISYVGCMT) are Extracellular-facing. A disulfide bond links C97 and C189. Residues 100 to 120 (QLFFFLFFVISECYMLTSMAY) traverse the membrane as a helical segment. Residues 121 to 139 (DRYVAICNPLLYKVTMSHQ) lie on the Cytoplasmic side of the membrane. A helical membrane pass occupies residues 140-160 (VCSMLTFAAYIMGLAGATAHT). At 161–197 (GCMLRLTFCSANIINHYLCDILPLLQLSCTSTYVNEV) the chain is on the extracellular side. The helical transmembrane segment at 198-217 (VVLIVVGINIMVPSCTILIS) threads the bilayer. At 218-237 (YVFIVTSILHIKSTQGRSKA) the chain is on the cytoplasmic side. A helical transmembrane segment spans residues 238 to 258 (FSTCSSHVIALSLFFGSAAFM). The Extracellular segment spans residues 259–270 (YIKYSSGSMEQG). The chain crosses the membrane as a helical span at residues 271–291 (KVSSVFYTNVVPMLNPLIYSL). Residues 292–313 (RNKDVKVALRKALIKIQRRNIF) lie on the Cytoplasmic side of the membrane.

Belongs to the G-protein coupled receptor 1 family.

The protein localises to the cell membrane. In terms of biological role, odorant receptor. The protein is Olfactory receptor 8B3 (OR8B3) of Homo sapiens (Human).